A 43-amino-acid chain; its full sequence is uncharacterized protein (43 aa).

Composition is skewed to polar residues over residues 1–19 (MSQK…SGAS) and 33–43 (PENSISKTFSK). A disordered region spans residues 1–43 (MSQKLSFFQQNTRNGSGASRTLVIKPPTIQPKPENSISKTFSK).

This is an uncharacterized protein from Dictyostelium discoideum (Social amoeba).